We begin with the raw amino-acid sequence, 267 residues long: Glutamate racemase (267 aa).

Substrate-binding positions include 10–11 and 42–43; these read DS and YG. Cys-73 (proton donor/acceptor) is an active-site residue. 74–75 is a binding site for substrate; that stretch reads NT. The active-site Proton donor/acceptor is Cys-183. 184–185 serves as a coordination point for substrate; sequence TH.

Belongs to the aspartate/glutamate racemases family.

It catalyses the reaction L-glutamate = D-glutamate. The protein operates within cell wall biogenesis; peptidoglycan biosynthesis. Provides the (R)-glutamate required for cell wall biosynthesis. This Lactobacillus helveticus (strain DPC 4571) protein is Glutamate racemase.